The primary structure comprises 342 residues: Nucleoid-associated protein Sputcn32_2288 (342 aa).

Belongs to the YejK family.

It is found in the cytoplasm. The protein localises to the nucleoid. This is Nucleoid-associated protein Sputcn32_2288 from Shewanella putrefaciens (strain CN-32 / ATCC BAA-453).